The primary structure comprises 1495 residues: Chromosome partition protein MukB (1495 aa).

60 to 67 provides a ligand contact to ATP; that stretch reads GGNGAGKS. 3 coiled-coil regions span residues 322 to 693, 861 to 1140, and 1233 to 1289; these read RART…SQPD, EDVM…AKVS, and IDAI…LQNI. The flexible hinge stretch occupies residues 692-809; it reads PDGSEDARLN…EIPLFGRAAR (118 aa).

It belongs to the SMC family. MukB subfamily. In terms of assembly, homodimerization via its hinge domain. Binds to DNA via its C-terminal region. Interacts, and probably forms a ternary complex, with MukE and MukF via its C-terminal region. The complex formation is stimulated by calcium or magnesium. Interacts with tubulin-related protein FtsZ.

It is found in the cytoplasm. Its subcellular location is the nucleoid. Its function is as follows. Plays a central role in chromosome condensation, segregation and cell cycle progression. Functions as a homodimer, which is essential for chromosome partition. Involved in negative DNA supercoiling in vivo, and by this means organize and compact chromosomes. May achieve or facilitate chromosome segregation by condensation DNA from both sides of a centrally located replisome during cell division. This chain is Chromosome partition protein MukB, found in Pasteurella multocida (strain Pm70).